We begin with the raw amino-acid sequence, 392 residues long: Formate-dependent phosphoribosylglycinamide formyltransferase (392 aa).

N(1)-(5-phospho-beta-D-ribosyl)glycinamide-binding positions include 22 to 23 (EL) and glutamate 82. ATP is bound by residues arginine 114, lysine 155, 160-165 (SSGKGQ), 195-198 (EGVV), and glutamate 203. The ATP-grasp domain occupies 119–308 (RLAAEELQLP…EFALHVRAFL (190 aa)). Residues glutamate 267 and glutamate 279 each contribute to the Mg(2+) site. N(1)-(5-phospho-beta-D-ribosyl)glycinamide is bound by residues aspartate 286, lysine 355, and 362–363 (RR).

It belongs to the PurK/PurT family. In terms of assembly, homodimer.

The catalysed reaction is N(1)-(5-phospho-beta-D-ribosyl)glycinamide + formate + ATP = N(2)-formyl-N(1)-(5-phospho-beta-D-ribosyl)glycinamide + ADP + phosphate + H(+). It functions in the pathway purine metabolism; IMP biosynthesis via de novo pathway; N(2)-formyl-N(1)-(5-phospho-D-ribosyl)glycinamide from N(1)-(5-phospho-D-ribosyl)glycinamide (formate route): step 1/1. Involved in the de novo purine biosynthesis. Catalyzes the transfer of formate to 5-phospho-ribosyl-glycinamide (GAR), producing 5-phospho-ribosyl-N-formylglycinamide (FGAR). Formate is provided by PurU via hydrolysis of 10-formyl-tetrahydrofolate. The sequence is that of Formate-dependent phosphoribosylglycinamide formyltransferase from Shigella boydii serotype 4 (strain Sb227).